The chain runs to 292 residues: Ephrin type-A receptor 4a (292 aa).

Residues 1–9 (IGIGEFGEV) and Lys-27 contribute to the ATP site. Residues 1–265 (IGIGEFGEVC…QIVNMLDKLI (265 aa)) form the Protein kinase domain. Asp-120 (proton acceptor) is an active-site residue. Tyr-153 bears the Phosphotyrosine; by autocatalysis mark.

This sequence belongs to the protein kinase superfamily. Tyr protein kinase family. Ephrin receptor subfamily. Widely expressed in the developing nervous system.

The protein resides in the cell membrane. It localises to the early endosome. It carries out the reaction L-tyrosyl-[protein] + ATP = O-phospho-L-tyrosyl-[protein] + ADP + H(+). Receptor tyrosine kinase which binds membrane-bound ephrin family ligands residing on adjacent cells, leading to contact-dependent bidirectional signaling into neighboring cells. The signaling pathway downstream of the receptor is referred to as forward signaling while the signaling pathway downstream of the ephrin ligand is referred to as reverse signaling. Highly promiscuous, it has the unique property among Eph receptors to bind and to be physiologically activated by both GPI-anchored ephrin-A and transmembrane ephrin-B ligands including efna1 and efnb3. Upon activation by ephrin ligands, modulates cell morphology and integrin-dependent cell adhesion through regulation of the Rac, Rap and Rho GTPases activity. Plays an important role in the development of the nervous system controlling different steps of axonal guidance including the establishment of the corticospinal projections. This chain is Ephrin type-A receptor 4a (epha4a), found in Danio rerio (Zebrafish).